Consider the following 353-residue polypeptide: Peptide chain release factor 1 (353 aa).

Glutamine 230 is subject to N5-methylglutamine.

This sequence belongs to the prokaryotic/mitochondrial release factor family. Post-translationally, methylated by PrmC. Methylation increases the termination efficiency of RF1.

The protein localises to the cytoplasm. Functionally, peptide chain release factor 1 directs the termination of translation in response to the peptide chain termination codons UAG and UAA. This Gluconobacter oxydans (strain 621H) (Gluconobacter suboxydans) protein is Peptide chain release factor 1.